Consider the following 538-residue polypeptide: Chaperonin GroEL 1 (538 aa).

ATP-binding positions include 29 to 32 (TLGP), 86 to 90 (DGTTT), Gly-413, and Asp-494.

The protein belongs to the chaperonin (HSP60) family. In terms of assembly, forms a cylinder of 14 subunits composed of two heptameric rings stacked back-to-back. Interacts with the co-chaperonin GroES.

Its subcellular location is the cytoplasm. The catalysed reaction is ATP + H2O + a folded polypeptide = ADP + phosphate + an unfolded polypeptide.. Its function is as follows. Together with its co-chaperonin GroES, plays an essential role in assisting protein folding. The GroEL-GroES system forms a nano-cage that allows encapsulation of the non-native substrate proteins and provides a physical environment optimized to promote and accelerate protein folding. The polypeptide is Chaperonin GroEL 1 (Mycobacterium avium (strain 104)).